We begin with the raw amino-acid sequence, 41 residues long: Alpha-conotoxin-like Pu1.2 (41 aa).

The propeptide occupies Leu-1 to Arg-21. 2 disulfides stabilise this stretch: Cys-24–Cys-30 and Cys-25–Cys-37. Residue Cys-37 is modified to Cysteine amide. Residues Gly-38–Arg-41 constitute a propeptide that is removed on maturation.

It belongs to the conotoxin A superfamily. In terms of processing, non-native isomers 'ribbon' (with disulfide connectivity C1-C4, C2-C3) and 'beads' (with disulfide connectivity C1-C2, C3-C4) also inhibit high voltage-activated (HVA) calcium channel currents in rat DRG neurons (25-30% inhibition at 1 uM toxin). Post-translationally, mutants Pu1.2(9-16), [C3S; C9S]Pu1.2 and [C4S]Pu1.2(1-9) are all C-terminally amidated. As to expression, expressed by the venom duct.

Its subcellular location is the secreted. In terms of biological role, alpha-conotoxins act on postsynaptic membranes, they bind to the nicotinic acetylcholine receptors (nAChR) and thus inhibit them. This toxin also inhibits high voltage-activated (HVA) calcium channel currents in rat DRG neurons (27% inhibition at 1 uM toxin) probably by activating GABA(B) receptors (GABBR1 and/or GABBR2). The sequence is that of Alpha-conotoxin-like Pu1.2 from Conus pulicarius (Flea-bitten cone).